Here is a 263-residue protein sequence, read N- to C-terminus: uncharacterized protein (263 aa).

The region spanning 6–121 (TAIIADDEPL…RLQTTCERVK (116 aa)) is the Response regulatory domain. Aspartate 58 carries the post-translational modification 4-aspartylphosphate. The region spanning 158–263 (IKATQGDDIH…RASQSLFKGM (106 aa)) is the HTH LytTR-type domain.

This is an uncharacterized protein from Vibrio parahaemolyticus serotype O3:K6 (strain RIMD 2210633).